Here is a 411-residue protein sequence, read N- to C-terminus: Citrate synthase (411 aa).

Residues His304 and Asp363 contribute to the active site.

It belongs to the citrate synthase family.

It carries out the reaction oxaloacetate + acetyl-CoA + H2O = citrate + CoA + H(+). It functions in the pathway carbohydrate metabolism; tricarboxylic acid cycle; isocitrate from oxaloacetate: step 1/2. This chain is Citrate synthase (gltA), found in Rickettsia akari.